We begin with the raw amino-acid sequence, 194 residues long: UPF0301 protein FTH_1193 (194 aa).

It belongs to the UPF0301 (AlgH) family.

This is UPF0301 protein FTH_1193 from Francisella tularensis subsp. holarctica (strain OSU18).